The chain runs to 131 residues: MSDIPGDLKFLKSHEWVRIEDNNRAIVGISDHAQNLLGDLVYVELPNIGDHLDAGATAAVIESVKAASDIYSPVTGKVIEVNTTLSDKPETINEDPYGEGWIMVIEMQAPEEISDLLSPDDYTEVLESDEH.

In terms of domain architecture, Lipoyl-binding spans 24–106; sequence RAIVGISDHA…YGEGWIMVIE (83 aa). Position 65 is an N6-lipoyllysine (lysine 65).

The protein belongs to the GcvH family. The glycine cleavage system is composed of four proteins: P, T, L and H. (R)-lipoate is required as a cofactor.

In terms of biological role, the glycine cleavage system catalyzes the degradation of glycine. The H protein shuttles the methylamine group of glycine from the P protein to the T protein. This Xylella fastidiosa (strain M12) protein is Glycine cleavage system H protein.